Reading from the N-terminus, the 296-residue chain is ATP synthase peripheral stalk subunit OSCP, mitochondrial (296 aa).

This sequence belongs to the ATPase delta chain family. As to quaternary structure, component of the ATP synthase complex composed at least of ATP5F1A/subunit alpha, ATP5F1B/subunit beta, ATP5MC1/subunit c (homooctomer), MT-ATP6/subunit a, MT-ATP8/subunit 8, ATP5ME/subunit e, ATP5MF/subunit f, ATP5MG/subunit g, ATP5MK/subunit k, ATP5MJ/subunit j, ATP5F1C/subunit gamma, ATP5F1D/subunit delta, ATP5F1E/subunit epsilon, ATP5PF/subunit F6, ATP5PB/subunit b, ATP5PD/subunit d, ATP5PO/subunit OSCP. ATP synthase complex consists of a soluble F(1) head domain (subunits alpha(3) and beta(3)) - the catalytic core - and a membrane F(0) domain - the membrane proton channel (subunits c, a, 8, e, f, g, k and j). These two domains are linked by a central stalk (subunits gamma, delta, and epsilon) rotating inside the F1 region and a stationary peripheral stalk (subunits F6, b, d, and OSCP).

The protein localises to the mitochondrion. It localises to the mitochondrion inner membrane. Its function is as follows. Subunit OSCP, of the mitochondrial membrane ATP synthase complex (F(1)F(0) ATP synthase or Complex V) that produces ATP from ADP in the presence of a proton gradient across the membrane which is generated by electron transport complexes of the respiratory chain. ATP synthase complex consist of a soluble F(1) head domain - the catalytic core - and a membrane F(1) domain - the membrane proton channel. These two domains are linked by a central stalk rotating inside the F(1) region and a stationary peripheral stalk. During catalysis, ATP synthesis in the catalytic domain of F(1) is coupled via a rotary mechanism of the central stalk subunits to proton translocation. In vivo, can only synthesize ATP although its ATP hydrolase activity can be activated artificially in vitro. Part of the complex F(0) domain. Part of the complex F(0) domain and the peripheric stalk, which acts as a stator to hold the catalytic alpha(3)beta(3) subcomplex and subunit a/ATP6 static relative to the rotary elements. This Dictyostelium discoideum (Social amoeba) protein is ATP synthase peripheral stalk subunit OSCP, mitochondrial.